We begin with the raw amino-acid sequence, 265 residues long: Mlc titration factor A (265 aa).

Residues His-111, His-148, His-152, and Glu-211 each contribute to the Zn(2+) site.

Belongs to the MtfA family. Interacts with Mlc. It depends on Zn(2+) as a cofactor.

It localises to the cytoplasm. Its function is as follows. Involved in the modulation of the activity of the glucose-phosphotransferase system (glucose-PTS). Interacts with the transcriptional repressor Mlc, preventing its interaction with DNA and leading to the modulation of expression of genes regulated by Mlc, including ptsG, which encodes the PTS system glucose-specific EIICB component. Functionally, shows zinc-dependent metallopeptidase activity. This is Mlc titration factor A from Escherichia coli O6:K15:H31 (strain 536 / UPEC).